A 91-amino-acid polypeptide reads, in one-letter code: YcgL domain-containing protein ESA_01460 (91 aa).

A YcgL domain is found at 1 to 85 (MFCVIYRSAR…PPENLLKQHL (85 aa)).

The sequence is that of YcgL domain-containing protein ESA_01460 from Cronobacter sakazakii (strain ATCC BAA-894) (Enterobacter sakazakii).